Reading from the N-terminus, the 88-residue chain is Small ribosomal subunit protein bS20 (88 aa).

The disordered stretch occupies residues 1–27 (MANIPSAKKRARQAEKRRKHNQSQRSM). Basic residues predominate over residues 7-22 (AKKRARQAEKRRKHNQ).

It belongs to the bacterial ribosomal protein bS20 family.

In terms of biological role, binds directly to 16S ribosomal RNA. This Alkalilimnicola ehrlichii (strain ATCC BAA-1101 / DSM 17681 / MLHE-1) protein is Small ribosomal subunit protein bS20.